The sequence spans 886 residues: Linoleate 9S-lipoxygenase 5 (886 aa).

Residues 35-180 enclose the PLAT domain; sequence IEGEVVVMKK…RYRSDRVFFS (146 aa). Residues 183 to 886 form the Lipoxygenase domain; sequence AYLPSETPEL…GKGIPNSVSI (704 aa). The interval 234–266 is disordered; sequence GPDSVRPVLGGSPELPYPRRGKTGRKSTKSDPK. Residues H542, H547, H733, N737, and I886 each coordinate Fe cation.

Belongs to the lipoxygenase family. Requires Fe cation as cofactor. Expressed in roots.

It carries out the reaction (9Z,12Z)-octadecadienoate + O2 = (9S)-hydroperoxy-(10E,12Z)-octadecadienoate. The enzyme catalyses (9Z,12Z,15Z)-octadecatrienoate + O2 = (9S)-hydroperoxy-(10E,12Z,15Z)-octadecatrienoate. It functions in the pathway lipid metabolism; oxylipin biosynthesis. Its function is as follows. 9S-lipoxygenase that can use linoleic acid or linolenic acid as substrates. Plant lipoxygenases may be involved in a number of diverse aspects of plant physiology including growth and development, pest resistance, and senescence or responses to wounding. Catalyzes the hydroperoxidation of lipids containing a cis,cis-1,4-pentadiene structure. Function as regulators of root development by controlling the emergence of lateral roots. 9S-lypoxygenase-derived oxylipins may play an antagonistic role to ethylene signaling in the control of responses involving oxidative stress, lipid peroxidation and plant defense. LOX5-derived oxylipins may facilitate performance of green peach aphid (Myzus persicae) on foliage. 9S-lypoxygenase-derived oxylipins are engaged during infection to control the balance between salicylic acid (SA) and jasmonate (JA) signaling to facilitate infection by the fungal pathogen Fusarium graminearum. 9S-lypoxygenase-derived oxylipins activate brassinosteroid signaling to promote cell wall-based defense and limit pathogen infection. Does not seem to contribute to the oxidation of free fatty acids during seed aging. This Arabidopsis thaliana (Mouse-ear cress) protein is Linoleate 9S-lipoxygenase 5.